Consider the following 235-residue polypeptide: Cytidylate kinase (235 aa).

11-19 (GPSGVGKST) contributes to the ATP binding site.

The protein belongs to the cytidylate kinase family. Type 1 subfamily.

Its subcellular location is the cytoplasm. The catalysed reaction is CMP + ATP = CDP + ADP. It carries out the reaction dCMP + ATP = dCDP + ADP. This Syntrophotalea carbinolica (strain DSM 2380 / NBRC 103641 / GraBd1) (Pelobacter carbinolicus) protein is Cytidylate kinase.